The chain runs to 361 residues: MSAAFDPSSYATQLDAKVARLRELLAPFGAPEPAVFDSPREHYRLRAEFRLWREDGQRHYAMFAQGDKHKAILIDDFPIASQRINALMPRLKAAWQASEELGNRLFQVEFLTTLAGDAMITMCYHRPLDEAWEVEARQLAEALGVSVIGRSKGKRLVIGRDYAIEELDVAGRVFSYRQPEGAFTQPNGAVNQKMLSWAFEAIGEREDDLLELYCGNGNFTLPLATRVRQVLATEISKTSVNAALSNLDENAVDNVRLVRLSAEELTQALNEVRPFRRLEGIDLKSYEFGTVFVDPPRAGMDPDTCELTRRFERILYISCNPETLAANIAQLQDTHRIERCALFDQFPYTHHMESGVLLVRR.

S-adenosyl-L-methionine-binding residues include glutamine 185, tyrosine 213, asparagine 218, glutamate 234, and aspartate 294. The active-site Nucleophile is cysteine 319. Catalysis depends on glutamate 353, which acts as the Proton acceptor.

This sequence belongs to the class I-like SAM-binding methyltransferase superfamily. RNA M5U methyltransferase family. TrmA subfamily.

It carries out the reaction uridine(54) in tRNA + S-adenosyl-L-methionine = 5-methyluridine(54) in tRNA + S-adenosyl-L-homocysteine + H(+). The catalysed reaction is uridine(341) in tmRNA + S-adenosyl-L-methionine = 5-methyluridine(341) in tmRNA + S-adenosyl-L-homocysteine + H(+). Functionally, dual-specificity methyltransferase that catalyzes the formation of 5-methyluridine at position 54 (m5U54) in all tRNAs, and that of position 341 (m5U341) in tmRNA (transfer-mRNA). The chain is tRNA/tmRNA (uracil-C(5))-methyltransferase from Pseudomonas putida (strain GB-1).